The primary structure comprises 864 residues: E3 ubiquitin-protein ligase Itchy (864 aa).

In terms of domain architecture, C2 spans 1-115 (MSDSGPQLDS…LKSNNMKLEE (115 aa)). Serine 2 is modified (N-acetylserine). A compositionally biased stretch (polar residues) spans 151-164 (NGETSCSESTTQND). A disordered region spans residues 151 to 294 (NGETSCSEST…SQAPLPPGWE (144 aa)). The span at 165–174 (DGCRTRDDTR) shows a compositional bias: basic and acidic residues. Positions 195–206 (NGNNSPSLSNGG) are enriched in low complexity. Serine 199 bears the Phosphoserine; by MAPK8 mark. The segment covering 210–224 (SRPPRPSRPPPPTPR) has biased composition (pro residues). Phosphothreonine; by MAPK8 is present on threonine 222. The span at 230 to 259 (NGSPSTNSDSDGSSTGSLPPTNTNVNTSTS) shows a compositional bias: low complexity. A Phosphoserine; by MAPK8 modification is found at serine 232. 2 consecutive WW domains span residues 287–320 (APLP…RPEP) and 319–352 (EPLP…RPTL). Residue threonine 346 is modified to Phosphothreonine; by SGK3. The segment at 356–432 (RNYEQWQLQR…RITQWEDPRS (77 aa)) is required for interaction with FYN. Phosphotyrosine; by FYN is present on tyrosine 381. 2 WW domains span residues 399-432 (GPLP…DPRS) and 439-472 (KPLP…DPRT). Serine 411 bears the Phosphoserine; by SGK3 mark. The HECT domain maps to 530-864 (SPQDLRRRLW…IEETEGFGQE (335 aa)). The MAP kinase docking site stretch occupies residues 535-544 (RRRLWVIFPG). Cysteine 832 functions as the Glycyl thioester intermediate in the catalytic mechanism.

In terms of assembly, monomer. Part of a ternary complex composed of SMAD3, ITCH/AIP4 and NEDD9/HEF1; within the complex NEDD9/HEF1 interacts (via N-terminus) with ITCH/AIP4 (via WW domains); the complex mediates ubiquitination and proteasomal degradation of NEDD9/HEF1. Interacts (via WW domains) with OCNL. Interacts (via WW domains) with NOTCH1. Interacts (via WW domains) JUN. Interacts with JUNB; the interaction promotes ITCH-mediated ubiquitination and degradation of JUNB. Interacts with FYN; the interaction phosphorylates ITCH on Tyr-381 decreasing binding of JUNB. Interacts (via WW domain 2) with N4BP1; the interaction inhibits the E3 ubiquitin-protein ligase activity. Interacts with NDFIP1 and NDFIP2; the interaction with NDFIP proteins activates the E3 ubiquitin-protein ligase and may induce its recruitment to exosomes. Interacts with ARHGEF7. Interacts with RNF11. Interacts (via the WW 1 domain) with NFE2 (via the PXY motif 1); the interaction promotes 'Lys-63'-linked ubiquitination of NFE2, retains it in the cytoplasm and prevents its transactivation activity. Interacts (via WW domains) with CXCR4 (via C-terminus); the interaction depends on CXCR4 phosphorylation. Found in a complex with E3 ligase DTX3L and ESCRT-0 components HGS and STAM. Interacts with DTX3L (via C-terminus); the interaction is increased upon CXCL12 stimulation and inhibits ITCH catalytic activity (the interaction is direct). Interacts with HGS. Interacts (via WW domains) with PCBP2 within a complex containing ITCH, MAVS and PCBP2. Interacts (via WW domains) with TXNIP (via C-terminus). Interacts with p15 BID. Interacts with ERBB4. Interacts with DTX1. Interacts with SPART. Interacts with SNX9 and SNX18. Interacts (via its WW domains) with ATN1. Interacts (via WW domains) with SGK3. Interacts with CBLC. Interacts with OTUD7B. Interacts (via WW domain 1,2 and 3) with PI4K2A; the interaction inhibits PI4K2A catalytic activity and promotes ITCH catalytic activity. Interacts with ARRDC4. Part of a complex containing ITCH, NDFIP1 and MAP3K7. Interacts with UBE2L3; the interaction is mediated by NDFIP1. Interacts with MAPK8/JNK1. Interacts (via WW domains) with ARRDC1 (via PPxY motifs); the interaction is direct and participates in the recruitment of the ubiquitin-protein ligase ITCH to the NOTCH1 receptor. Interacts (via WW domains) with ARRDC2. Interacts (via WW domains) with ARRDC3. Interacts directly with LDLRAD3; this interaction promotes ITCH auto-ubiquitination leading to its degradation. Interacts with ENTREP1; enhances the ubiquitination of CXCR4 by ITCH and its subsequent endocytosis. Interacts with USP12 and WDR48/UAF1; the interaction is more efficient when both USP12 and WDR48/UAF1 are involved and may facilitate the recruitment of the USP12 deubiquitinase complex to Notch. As to quaternary structure, (Microbial infection) Interacts with Epstein-Barr virus LMP2A. In terms of processing, on T-cell activation, phosphorylation by the JNK cascade on serine and threonine residues surrounding the PRR domain accelerates the ubiquitination and degradation of JUN and JUNB. The increased ITCH catalytic activity due to phosphorylation by JNK1 may occur due to a conformational change disrupting the interaction between the PRR/WW motifs domain and the HECT domain and, thus exposing the HECT domain. Phosphorylation by FYN reduces interaction with JUNB and negatively controls JUN ubiquitination and degradation. Interacts directly with LDLRAD3; this interaction promotes ITCH auto-ubiquitination leading to its degradation. Monoubiquitinated. Autopolyubiquitinated with 'Lys-63' linkages which does not lead to protein degradation. As to expression, detected in uterus (at protein level). Widely expressed.

The protein resides in the cell membrane. The protein localises to the cytoplasm. It localises to the nucleus. Its subcellular location is the early endosome membrane. It is found in the endosome membrane. The enzyme catalyses S-ubiquitinyl-[E2 ubiquitin-conjugating enzyme]-L-cysteine + [acceptor protein]-L-lysine = [E2 ubiquitin-conjugating enzyme]-L-cysteine + N(6)-ubiquitinyl-[acceptor protein]-L-lysine.. It participates in protein modification; protein ubiquitination. Its activity is regulated as follows. Activated by NDFIP1- and NDFIP2-binding. Activated by PI4K2A-binding. Inhibited by DTX3L-binding. Inhibited by N4BP1 binding. Acts as an E3 ubiquitin-protein ligase which accepts ubiquitin from an E2 ubiquitin-conjugating enzyme in the form of a thioester and then directly transfers the ubiquitin to targeted substrates. It catalyzes 'Lys-29'-, 'Lys-48'- and 'Lys-63'-linked ubiquitin conjugation. Involved in the control of inflammatory signaling pathways. Is an essential component of a ubiquitin-editing protein complex, comprising also TNFAIP3, TAX1BP1 and RNF11, that ensures the transient nature of inflammatory signaling pathways. Promotes the association of the complex after TNF stimulation. Once the complex is formed, TNFAIP3 deubiquitinates 'Lys-63' polyubiquitin chains on RIPK1 and catalyzes the formation of 'Lys-48'-polyubiquitin chains. This leads to RIPK1 proteasomal degradation and consequently termination of the TNF- or LPS-mediated activation of NFKB1. Ubiquitinates RIPK2 by 'Lys-63'-linked conjugation and influences NOD2-dependent signal transduction pathways. Regulates the transcriptional activity of several transcription factors involved in immune response. Ubiquitinates NFE2 by 'Lys-63' linkages and is implicated in the control of the development of hematopoietic lineages. Mediates JUN ubiquitination and degradation. Mediates JUNB ubiquitination and degradation. Critical regulator of type 2 helper T (Th2) cell cytokine production by inducing JUNB ubiquitination and degradation. Involved in the negative regulation of MAVS-dependent cellular antiviral responses. Ubiquitinates MAVS through 'Lys-48'-linked conjugation resulting in MAVS proteasomal degradation. Following ligand stimulation, regulates sorting of Wnt receptor FZD4 to the degradative endocytic pathway probably by modulating PI42KA activity. Ubiquitinates PI4K2A and negatively regulates its catalytic activity. Ubiquitinates chemokine receptor CXCR4 and regulates sorting of CXCR4 to the degradative endocytic pathway following ligand stimulation by ubiquitinating endosomal sorting complex required for transport ESCRT-0 components HGS and STAM. Targets DTX1 for lysosomal degradation and controls NOTCH1 degradation, in the absence of ligand, through 'Lys-29'-linked polyubiquitination. Ubiquitinates SNX9. Ubiquitinates MAP3K7 through 'Lys-48'-linked conjugation. Together with UBR5, involved in the regulation of apoptosis and reactive oxygen species levels through the ubiquitination and proteasomal degradation of TXNIP: catalyzes 'Lys-48'-/'Lys-63'-branched ubiquitination of TXNIP. ITCH synthesizes 'Lys-63'-linked chains, while UBR5 is branching multiple 'Lys-48'-linked chains of substrate initially modified. Mediates the antiapoptotic activity of epidermal growth factor through the ubiquitination and proteasomal degradation of p15 BID. Ubiquitinates BRAT1 and this ubiquitination is enhanced in the presence of NDFIP1. Ubiquitinates NEDD9/HEF1, resulting in proteasomal degradation of NEDD9/HEF1. In Mus musculus (Mouse), this protein is E3 ubiquitin-protein ligase Itchy (Itch).